The sequence spans 220 residues: Protein-L-isoaspartate O-methyltransferase (220 aa).

Residue Ser64 is part of the active site.

The protein belongs to the methyltransferase superfamily. L-isoaspartyl/D-aspartyl protein methyltransferase family.

The protein resides in the cytoplasm. It catalyses the reaction [protein]-L-isoaspartate + S-adenosyl-L-methionine = [protein]-L-isoaspartate alpha-methyl ester + S-adenosyl-L-homocysteine. Catalyzes the methyl esterification of L-isoaspartyl residues in peptides and proteins that result from spontaneous decomposition of normal L-aspartyl and L-asparaginyl residues. It plays a role in the repair and/or degradation of damaged proteins. The polypeptide is Protein-L-isoaspartate O-methyltransferase (Thermococcus onnurineus (strain NA1)).